We begin with the raw amino-acid sequence, 178 residues long: Large ribosomal subunit protein uL6 (178 aa).

It belongs to the universal ribosomal protein uL6 family. In terms of assembly, part of the 50S ribosomal subunit.

In terms of biological role, this protein binds to the 23S rRNA, and is important in its secondary structure. It is located near the subunit interface in the base of the L7/L12 stalk, and near the tRNA binding site of the peptidyltransferase center. The polypeptide is Large ribosomal subunit protein uL6 (Campylobacter lari (strain RM2100 / D67 / ATCC BAA-1060)).